The primary structure comprises 417 residues: Divinyl chlorophyllide a 8-vinyl-reductase, chloroplastic (417 aa).

A chloroplast-targeting transit peptide spans 1-49; that stretch reads MSLCSSFNVFASYSPKPKTIFKDSKFISQFQVKSSPLASTFHTNESSTS.

In terms of tissue distribution, highly expressed in leaves, stems and flower buds. Detected in roots.

It localises to the plastid. The protein resides in the chloroplast. It carries out the reaction protochlorophyllide a + NADP(+) = 3,8-divinyl protochlorophyllide a + NADPH + H(+). The protein operates within porphyrin-containing compound metabolism; chlorophyll biosynthesis. Functionally, catalyzes the conversion of divinyl chlorophyllide to monovinyl chlorophyllide. Reduces the 8-vinyl group of the tetrapyrrole to an ethyl group using NADPH as the reductant. The best substrate is (3,8-divinyl)-chlorophyllide a (DV-Chlidea). Very low activity with (3,8-divinyl)-protochlorophyllide a (DV-Pchlidea) and (3,8-divinyl)-magnesium-protoporphyrin IX monomethyl ester (DV-MPE). No activity with (3,8-divinyl)-chlorophyllide b (DV-Chlideb), (3,8-divinyl)-magnesium-protoporphyrin IX (DV-Mg-Proto) and either (3,8-divinyl)-chlorophyll a (DV-Chla) or b (DV-Chlb). The protein is Divinyl chlorophyllide a 8-vinyl-reductase, chloroplastic (DVR) of Arabidopsis thaliana (Mouse-ear cress).